Reading from the N-terminus, the 315-residue chain is Gamma-hemolysin component C (315 aa).

The first 29 residues, 1 to 29 (MLKNKILATTLSVSLLAPLANPLLENAKA), serve as a signal peptide directing secretion.

It belongs to the aerolysin family. Toxicity requires sequential binding and synergistic association of a class S and a class F component which form heterooligomeric complexes. HlgC (class S) associates with HlgB (class F) thus forming an CB toxin.

Its function is as follows. Toxin that seems to act by forming pores in the membrane of the cell. Has a hemolytic and a leucotoxic activity. This is Gamma-hemolysin component C (hlgC) from Staphylococcus aureus (strain MRSA252).